A 30-amino-acid polypeptide reads, in one-letter code: Matrix Gla protein (30 aa).

Residues Ser2, Ser3, and Ser5 each carry the phosphoserine modification.

Belongs to the osteocalcin/matrix Gla protein family. Requires vitamin K-dependent gamma-carboxylation for its function.

It localises to the secreted. Its function is as follows. Associates with the organic matrix of calcified cartilage. In Prionace glauca (Blue shark), this protein is Matrix Gla protein (mgp).